The sequence spans 155 residues: SsrA-binding protein (155 aa).

Belongs to the SmpB family.

It is found in the cytoplasm. In terms of biological role, required for rescue of stalled ribosomes mediated by trans-translation. Binds to transfer-messenger RNA (tmRNA), required for stable association of tmRNA with ribosomes. tmRNA and SmpB together mimic tRNA shape, replacing the anticodon stem-loop with SmpB. tmRNA is encoded by the ssrA gene; the 2 termini fold to resemble tRNA(Ala) and it encodes a 'tag peptide', a short internal open reading frame. During trans-translation Ala-aminoacylated tmRNA acts like a tRNA, entering the A-site of stalled ribosomes, displacing the stalled mRNA. The ribosome then switches to translate the ORF on the tmRNA; the nascent peptide is terminated with the 'tag peptide' encoded by the tmRNA and targeted for degradation. The ribosome is freed to recommence translation, which seems to be the essential function of trans-translation. This is SsrA-binding protein from Bacillus cereus (strain 03BB102).